The sequence spans 120 residues: MAMRAKDALGRFGEEVASRHLAAGGAAILDRNWRCREGELDLVLRDGADLVFCEVKTRSGTRFGSAAEAVVGRKAARIRRLAARWLAEHPHAPSSVRFDVVLVSRPPVGPVRVEHLRGAF.

Belongs to the UPF0102 family.

This chain is UPF0102 protein FRAAL5785, found in Frankia alni (strain DSM 45986 / CECT 9034 / ACN14a).